The sequence spans 88 residues: Small ribosomal subunit protein bS20 (88 aa).

Positions 1-26 (MANTAQARKRARQNTKRRQNSASQRS) are disordered. Basic residues predominate over residues 7-19 (ARKRARQNTKRRQ).

This sequence belongs to the bacterial ribosomal protein bS20 family.

Functionally, binds directly to 16S ribosomal RNA. This is Small ribosomal subunit protein bS20 from Psychrobacter cryohalolentis (strain ATCC BAA-1226 / DSM 17306 / VKM B-2378 / K5).